We begin with the raw amino-acid sequence, 584 residues long: Sulfite reductase [NADPH] hemoprotein beta-component (584 aa).

[4Fe-4S] cluster contacts are provided by Cys-447, Cys-453, Cys-492, and Cys-496. Residue Cys-496 coordinates siroheme.

Belongs to the nitrite and sulfite reductase 4Fe-4S domain family. As to quaternary structure, alpha(8)-beta(8). The alpha component is a flavoprotein, the beta component is a hemoprotein. Siroheme is required as a cofactor. [4Fe-4S] cluster serves as cofactor.

The catalysed reaction is hydrogen sulfide + 3 NADP(+) + 3 H2O = sulfite + 3 NADPH + 4 H(+). It functions in the pathway sulfur metabolism; hydrogen sulfide biosynthesis; hydrogen sulfide from sulfite (NADPH route): step 1/1. Component of the sulfite reductase complex that catalyzes the 6-electron reduction of sulfite to sulfide. This is one of several activities required for the biosynthesis of L-cysteine from sulfate. This is Sulfite reductase [NADPH] hemoprotein beta-component from Colwellia psychrerythraea (strain 34H / ATCC BAA-681) (Vibrio psychroerythus).